The chain runs to 281 residues: 4-deoxy-L-threo-5-hexosulose-uronate ketol-isomerase (281 aa).

The Zn(2+) site is built by H198, H200, E205, and H248.

The protein belongs to the KduI family. It depends on Zn(2+) as a cofactor.

The enzyme catalyses 5-dehydro-4-deoxy-D-glucuronate = 3-deoxy-D-glycero-2,5-hexodiulosonate. It functions in the pathway glycan metabolism; pectin degradation; 2-dehydro-3-deoxy-D-gluconate from pectin: step 4/5. In terms of biological role, catalyzes the isomerization of 5-dehydro-4-deoxy-D-glucuronate to 3-deoxy-D-glycero-2,5-hexodiulosonate. The polypeptide is 4-deoxy-L-threo-5-hexosulose-uronate ketol-isomerase (Lacticaseibacillus paracasei (strain ATCC 334 / BCRC 17002 / CCUG 31169 / CIP 107868 / KCTC 3260 / NRRL B-441) (Lactobacillus paracasei)).